We begin with the raw amino-acid sequence, 358 residues long: Membrane-bound lytic murein transglycosylase C (358 aa).

Residues 1–19 form the signal peptide; the sequence is MKITLKKLLILAIVPFLYA. Cys-20 carries N-palmitoyl cysteine lipidation. The S-diacylglycerol cysteine moiety is linked to residue Cys-20.

This sequence belongs to the transglycosylase Slt family.

It is found in the cell outer membrane. The enzyme catalyses Exolytic cleavage of the (1-&gt;4)-beta-glycosidic linkage between N-acetylmuramic acid (MurNAc) and N-acetylglucosamine (GlcNAc) residues in peptidoglycan, from either the reducing or the non-reducing ends of the peptidoglycan chains, with concomitant formation of a 1,6-anhydrobond in the MurNAc residue.. Functionally, murein-degrading enzyme. May play a role in recycling of muropeptides during cell elongation and/or cell division. In Actinobacillus succinogenes (strain ATCC 55618 / DSM 22257 / CCUG 43843 / 130Z), this protein is Membrane-bound lytic murein transglycosylase C.